The chain runs to 211 residues: Small ribosomal subunit protein uS4 (211 aa).

The region spanning 99–160 is the S4 RNA-binding domain; the sequence is RRLDSVVYQM…KSRNIQQVRE (62 aa).

It belongs to the universal ribosomal protein uS4 family. As to quaternary structure, part of the 30S ribosomal subunit. Contacts protein S5. The interaction surface between S4 and S5 is involved in control of translational fidelity.

Functionally, one of the primary rRNA binding proteins, it binds directly to 16S rRNA where it nucleates assembly of the body of the 30S subunit. In terms of biological role, with S5 and S12 plays an important role in translational accuracy. The sequence is that of Small ribosomal subunit protein uS4 from Petrotoga mobilis (strain DSM 10674 / SJ95).